A 129-amino-acid polypeptide reads, in one-letter code: Large ribosomal subunit protein uL14m (129 aa).

It belongs to the universal ribosomal protein uL14 family. Component of the mitochondrial ribosome large subunit (39S) which comprises a 16S rRNA and about 50 distinct proteins.

The protein localises to the mitochondrion. This chain is Large ribosomal subunit protein uL14m (mrpl14), found in Dictyostelium discoideum (Social amoeba).